We begin with the raw amino-acid sequence, 188 residues long: Probable manganese efflux pump MntP (188 aa).

The next 5 membrane-spanning stretches (helical) occupy residues 3–23 (ITAT…ASIG), 66–86 (LEWN…RMII), 106–128 (WLLV…GLAF), 143–163 (ATLI…SIIG), and 168–188 (ILGG…HFHG).

It belongs to the MntP (TC 9.B.29) family.

It localises to the cell inner membrane. Probably functions as a manganese efflux pump. This is Probable manganese efflux pump MntP from Shigella flexneri serotype 5b (strain 8401).